Reading from the N-terminus, the 147-residue chain is MTYRKTDEEVSKLTPEQYRVTQQNGTERPFTGEYTDNKRPGIYVDIVSGEPLFASADKFDSGCGWPSFTKPIVPANVNELRDNSHGMIRTEVRSAHGDSHLGHVFPDGPQDRGGLRYCINSAALRFIPREEMEAEGYGGYFNQVEDI.

One can recognise a MsrB domain in the interval 6–129 (TDEEVSKLTP…NSAALRFIPR (124 aa)). Residue cysteine 118 is the Nucleophile of the active site.

This sequence belongs to the MsrB Met sulfoxide reductase family.

It carries out the reaction L-methionyl-[protein] + [thioredoxin]-disulfide + H2O = L-methionyl-(R)-S-oxide-[protein] + [thioredoxin]-dithiol. This chain is Peptide methionine sulfoxide reductase MsrB 2 (msrB2), found in Rhizobium meliloti (strain 1021) (Ensifer meliloti).